Reading from the N-terminus, the 516-residue chain is MTLDLDALDRALDALPNLFRGPGGVAGVVKDGQVVASRAWGYADLTRRRPMETATRLPICSISKQFTCGVLLDTLGDTAAYDARVAEFLPQFEGPLPTLRQLCDNQSGLRDYWALTVLQGAEATQTFRREDALPLIARMKTGHFPPGTAYSYCNCNFRIVSEILESETGRALPDLYAERIFGPAGMRTAELTSDTRHPADEVVGYEGSDAVGFFPADNGIFWIGDAGISASLQDMLAYESWIDATRDDENSIYRRISVPPAYVCGTPASYGFGLSHETVAGVKVTGHGGALRGFRAQRFHAADERLSVMVIFNHEASAHAAASSLLAAALGHEAPKGARPEGWAGQWLDPESGLLLRVGEDAEGLTLRFATGPDRLTLGEDGVPRGAGVSLARDGAMLVMNRTSDNLTVRAEPLPVVTVADAGEIAGRYHARELEADLVIEARDGGAYAGFEGLLGEGPMERLHPVGPDVWIVTTRRSMDAPAPGDWTLQVRREGGAVTGLRLGCWLARRIDYARV.

Ser61 acts as the Nucleophile in catalysis. The active-site Proton donor/acceptor is the Lys64. The tract at residues 476-486 (RRSMDAPAPGD) is important for specificity. Residue Asp480 participates in substrate binding.

This sequence belongs to the peptidase S12 family. As to quaternary structure, homodimer.

The enzyme catalyses Release of an N-terminal D-amino acid from a peptide, Xaa-|-Yaa-, in which Xaa is preferably D-Ala, D-Ser or D-Thr. D-amino acid amides and methyl esters also are hydrolyzed, as is glycine amide.. With respect to regulation, inhibited by beta-lactam compounds such as 6-aminopenicillic acid, 7-aminocephalosporanic acid, benzylpenicillin and ampicillin. Inhibited by p-chloromercuribenzoate. Its function is as follows. Hydrolyzes N-terminal residues in D-amino acid-containing peptides. The sequence is that of D-aminopeptidase from Cereibacter sphaeroides (strain KD131 / KCTC 12085) (Rhodobacter sphaeroides).